An 801-amino-acid polypeptide reads, in one-letter code: Phenylalanine--tRNA ligase beta subunit (801 aa).

The tRNA-binding domain maps to Leu-39–Gly-154. The B5 domain maps to Ile-398–Ser-475. The Mg(2+) site is built by Asp-453, Asp-459, Glu-462, and Glu-463. In terms of domain architecture, FDX-ACB spans Ser-708 to Arg-800.

This sequence belongs to the phenylalanyl-tRNA synthetase beta subunit family. Type 1 subfamily. In terms of assembly, tetramer of two alpha and two beta subunits. It depends on Mg(2+) as a cofactor.

The protein localises to the cytoplasm. It carries out the reaction tRNA(Phe) + L-phenylalanine + ATP = L-phenylalanyl-tRNA(Phe) + AMP + diphosphate + H(+). This is Phenylalanine--tRNA ligase beta subunit from Helicobacter hepaticus (strain ATCC 51449 / 3B1).